A 689-amino-acid chain; its full sequence is Glycine--tRNA ligase beta subunit (689 aa).

It belongs to the class-II aminoacyl-tRNA synthetase family. In terms of assembly, tetramer of two alpha and two beta subunits.

Its subcellular location is the cytoplasm. It carries out the reaction tRNA(Gly) + glycine + ATP = glycyl-tRNA(Gly) + AMP + diphosphate. The chain is Glycine--tRNA ligase beta subunit from Salmonella heidelberg (strain SL476).